The sequence spans 588 residues: 2-succinyl-5-enolpyruvyl-6-hydroxy-3-cyclohexene-1-carboxylate synthase (588 aa).

This sequence belongs to the TPP enzyme family. MenD subfamily. As to quaternary structure, homodimer. The cofactor is Mg(2+). Mn(2+) is required as a cofactor. Thiamine diphosphate serves as cofactor.

It carries out the reaction isochorismate + 2-oxoglutarate + H(+) = 5-enolpyruvoyl-6-hydroxy-2-succinyl-cyclohex-3-ene-1-carboxylate + CO2. It participates in quinol/quinone metabolism; 1,4-dihydroxy-2-naphthoate biosynthesis; 1,4-dihydroxy-2-naphthoate from chorismate: step 2/7. Its pathway is cofactor biosynthesis; phylloquinone biosynthesis. Functionally, catalyzes the thiamine diphosphate-dependent decarboxylation of 2-oxoglutarate and the subsequent addition of the resulting succinic semialdehyde-thiamine pyrophosphate anion to isochorismate to yield 2-succinyl-5-enolpyruvyl-6-hydroxy-3-cyclohexene-1-carboxylate (SEPHCHC). This is 2-succinyl-5-enolpyruvyl-6-hydroxy-3-cyclohexene-1-carboxylate synthase from Prochlorococcus marinus (strain MIT 9515).